The chain runs to 210 residues: ATP phosphoribosyltransferase (210 aa).

The protein belongs to the ATP phosphoribosyltransferase family. Short subfamily. As to quaternary structure, heteromultimer composed of HisG and HisZ subunits.

The protein resides in the cytoplasm. It catalyses the reaction 1-(5-phospho-beta-D-ribosyl)-ATP + diphosphate = 5-phospho-alpha-D-ribose 1-diphosphate + ATP. Its pathway is amino-acid biosynthesis; L-histidine biosynthesis; L-histidine from 5-phospho-alpha-D-ribose 1-diphosphate: step 1/9. In terms of biological role, catalyzes the condensation of ATP and 5-phosphoribose 1-diphosphate to form N'-(5'-phosphoribosyl)-ATP (PR-ATP). Has a crucial role in the pathway because the rate of histidine biosynthesis seems to be controlled primarily by regulation of HisG enzymatic activity. In Caldanaerobacter subterraneus subsp. tengcongensis (strain DSM 15242 / JCM 11007 / NBRC 100824 / MB4) (Thermoanaerobacter tengcongensis), this protein is ATP phosphoribosyltransferase.